The following is a 281-amino-acid chain: NADH-cytochrome b5 reductase 1 (281 aa).

The chain crosses the membrane as a helical span at residues 2–22 (VPGKFIFTATFVLLCTIIAVV). The FAD-binding FR-type domain occupies 37-141 (EKLQEFPLVA…RGPKGFYHYQ (105 aa)). Residues 121-136 (AQLN…GPKG) and 147-179 (EIGM…KVSL) each bind FAD.

The protein belongs to the flavoprotein pyridine nucleotide cytochrome reductase family. Monomer. Component of the 2-(3-amino-3-carboxypropyl)histidine synthase complex composed of DPH1, DPH2, DPH3 and a NADH-dependent reductase, predominantly CBR1. It depends on FAD as a cofactor.

It localises to the mitochondrion outer membrane. The catalysed reaction is 2 Fe(III)-[cytochrome b5] + NADH = 2 Fe(II)-[cytochrome b5] + NAD(+) + H(+). It carries out the reaction 2 Fe(3+)-[Dph3] + NADH = 2 Fe(2+)-[Dph3] + NAD(+) + H(+). It functions in the pathway protein modification; peptidyl-diphthamide biosynthesis. Its function is as follows. NADH-dependent reductase for DPH3 and cytochrome b5. Required for the first step of diphthamide biosynthesis, a post-translational modification of histidine which occurs in elongation factor 2. DPH1 and DPH2 transfer a 3-amino-3-carboxypropyl (ACP) group from S-adenosyl-L-methionine (SAM) to a histidine residue, the reaction is assisted by a reduction system comprising DPH3 and a NADH-dependent reductase, predominantly CBR1. By reducing DPH3, also involved in the formation of the tRNA wobble base modification mcm5s 2U (5-methoxycarbonylmethyl-2-thiouridine), mediated by the elongator complex. The cytochrome b5/NADH cytochrome b5 reductase electron transfer system supports the catalytic activity of several sterol biosynthetic enzymes. This Kluyveromyces lactis (strain ATCC 8585 / CBS 2359 / DSM 70799 / NBRC 1267 / NRRL Y-1140 / WM37) (Yeast) protein is NADH-cytochrome b5 reductase 1 (CBR1).